Reading from the N-terminus, the 121-residue chain is Putative iron-sulfur cluster insertion protein ErpA (121 aa).

The iron-sulfur cluster site is built by C49, C113, and C115.

It belongs to the HesB/IscA family. In terms of assembly, homodimer. Requires iron-sulfur cluster as cofactor.

Its function is as follows. Required for insertion of 4Fe-4S clusters. The polypeptide is Putative iron-sulfur cluster insertion protein ErpA (Polaromonas sp. (strain JS666 / ATCC BAA-500)).